Reading from the N-terminus, the 253-residue chain is Protein C1orf43 homolog (253 aa).

Residues 11–31 (VNVVLVMAYGSLVFVLLFIFV) traverse the membrane as a helical segment. A disordered region spans residues 194 to 213 (SGSSQRQHQSAAKDLTQSPE).

Its subcellular location is the membrane. The protein resides in the golgi apparatus. It localises to the mitochondrion. Functionally, general regulator of phagocytosis. Required to uptake Gram negative bacterium by macrophages. The protein is Protein C1orf43 homolog of Bos taurus (Bovine).